The following is a 190-amino-acid chain: Pyridoxal 5'-phosphate synthase subunit PdxT (190 aa).

46–48 contributes to the L-glutamine binding site; that stretch reads GES. Cysteine 78 serves as the catalytic Nucleophile. L-glutamine contacts are provided by residues arginine 105 and 134 to 135; that span reads IR. Catalysis depends on charge relay system residues histidine 170 and glutamate 172.

Belongs to the glutaminase PdxT/SNO family. As to quaternary structure, in the presence of PdxS, forms a dodecamer of heterodimers. Only shows activity in the heterodimer.

It carries out the reaction aldehydo-D-ribose 5-phosphate + D-glyceraldehyde 3-phosphate + L-glutamine = pyridoxal 5'-phosphate + L-glutamate + phosphate + 3 H2O + H(+). The catalysed reaction is L-glutamine + H2O = L-glutamate + NH4(+). The protein operates within cofactor biosynthesis; pyridoxal 5'-phosphate biosynthesis. In terms of biological role, catalyzes the hydrolysis of glutamine to glutamate and ammonia as part of the biosynthesis of pyridoxal 5'-phosphate. The resulting ammonia molecule is channeled to the active site of PdxS. The chain is Pyridoxal 5'-phosphate synthase subunit PdxT from Clostridium beijerinckii (strain ATCC 51743 / NCIMB 8052) (Clostridium acetobutylicum).